The following is a 492-amino-acid chain: Beclin 1-associated autophagy-related key regulator (492 aa).

S29 bears the Phosphoserine mark. Residues 43-58 (CPLCNTTRRRLTCAKC) are cysteine repeats. A coiled-coil region spans residues 71 to 180 (DRERFIDKKE…KLGDLVEKKT (110 aa)). Positions 410–473 (PGVAGESDES…PIASSSAGGM (64 aa)) are disordered. The tract at residues 413–492 (AGESDESGDE…SWFKAYTGHR (80 aa)) is BATS. Over residues 415–433 (ESDESGDERVSDEETDLGT) the composition is skewed to acidic residues. Position 416 is a phosphoserine (S416). The residue at position 429 (T429) is a Phosphothreonine. The span at 448-473 (SQSVEVSQSQSTQASPPIASSSAGGM) shows a compositional bias: low complexity.

It belongs to the ATG14 family. In terms of assembly, forms homooligomers; homo-oligomerization is essential for the roles in membrane tethering and enhancement of SNARE-mediated fusion. Component of the PI3K (PI3KC3/PI3K-III/class III phosphatidylinositol 3-kinase) complex I (PI3KC3-C1) in which the core composed of the catalytic subunit PIK3C3, the regulatory subunit PIK3R4 and BECN1 is associated with ATG14. PI3KC3-C1 displays a V-shaped architecture with PIK3R4 serving as a bridge between PIK3C3 and the ATG14:BECN1 subcomplex. PI3KC3-C1 can associate with further regulatory subunits. Interacts with PIK3CB. Interacts (via coiled-coil domain) with BECN2 (via coiled-coil domain); this interaction is tighter than BECN2 self-association. Interacts with the STX17-SNAP29 binary t-SNARE complex. Interacts with NRBF2. Interacts with PIK3C3 and BECN1; this interaction is increased in the absence of TMEM39A. Interacts with STEEP1; the interaction is required for trafficking of STING1 from the endoplasmic reticulum. Interacts with ARMC3 (via ARM domains). In terms of processing, ubiquitinated via 'Lys-6', 'Lys-11' and 'Lys-63'-linked polyubiquitin chains on multiple lysines by MARCHF7, leading to ATG14 aggregation and loss of interaction with STX17.

It is found in the cytoplasm. Its subcellular location is the endoplasmic reticulum membrane. The protein localises to the preautophagosomal structure membrane. It localises to the cytoplasmic vesicle. The protein resides in the autophagosome membrane. Functionally, required for both basal and inducible autophagy. Determines the localization of the autophagy-specific PI3-kinase complex PI3KC3-C1. Plays a role in autophagosome formation and MAP1LC3/LC3 conjugation to phosphatidylethanolamine. Promotes BECN1 translocation from the trans-Golgi network to autophagosomes. Enhances PIK3C3 activity in a BECN1-dependent manner. Essential for the autophagy-dependent phosphorylation of BECN1. Stimulates the phosphorylation of BECN1, but suppresses the phosphorylation PIK3C3 by AMPK. Binds to STX17-SNAP29 binary t-SNARE complex on autophagosomes and primes it for VAMP8 interaction to promote autophagosome-endolysosome fusion. Modulates the hepatic lipid metabolism. The chain is Beclin 1-associated autophagy-related key regulator from Homo sapiens (Human).